We begin with the raw amino-acid sequence, 217 residues long: Probable coenzyme A transferase subunit beta (217 aa).

E50 is a catalytic residue.

It belongs to the 3-oxoacid CoA-transferase subunit B family. As to quaternary structure, heterodimer of a subunit alpha and a subunit beta.

The sequence is that of Probable coenzyme A transferase subunit beta (yodR) from Bacillus subtilis (strain 168).